The sequence spans 273 residues: Large ribosomal subunit protein uL2 (273 aa).

Disordered regions lie at residues lysine 28–isoleucine 54 and arginine 221–lysine 273. The segment covering lysine 39–arginine 48 has biased composition (low complexity).

This sequence belongs to the universal ribosomal protein uL2 family. Part of the 50S ribosomal subunit. Forms a bridge to the 30S subunit in the 70S ribosome.

One of the primary rRNA binding proteins. Required for association of the 30S and 50S subunits to form the 70S ribosome, for tRNA binding and peptide bond formation. It has been suggested to have peptidyltransferase activity; this is somewhat controversial. Makes several contacts with the 16S rRNA in the 70S ribosome. The polypeptide is Large ribosomal subunit protein uL2 (Pectobacterium carotovorum subsp. carotovorum (strain PC1)).